A 77-amino-acid chain; its full sequence is ATP synthase subunit c (77 aa).

The next 2 membrane-spanning stretches (helical) occupy residues 13–33 and 55–75; these read IATV…GIVA and FLGI…YFIF.

Belongs to the ATPase C chain family. In terms of assembly, F-type ATPases have 2 components, F(1) - the catalytic core - and F(0) - the membrane proton channel. F(1) has five subunits: alpha(3), beta(3), gamma(1), delta(1), epsilon(1). F(0) has three main subunits: a(1), b(2) and c(10-14). The alpha and beta chains form an alternating ring which encloses part of the gamma chain. F(1) is attached to F(0) by a central stalk formed by the gamma and epsilon chains, while a peripheral stalk is formed by the delta and b chains.

It is found in the cell membrane. Its function is as follows. F(1)F(0) ATP synthase produces ATP from ADP in the presence of a proton or sodium gradient. F-type ATPases consist of two structural domains, F(1) containing the extramembraneous catalytic core and F(0) containing the membrane proton channel, linked together by a central stalk and a peripheral stalk. During catalysis, ATP synthesis in the catalytic domain of F(1) is coupled via a rotary mechanism of the central stalk subunits to proton translocation. In terms of biological role, key component of the F(0) channel; it plays a direct role in translocation across the membrane. A homomeric c-ring of between 10-14 subunits forms the central stalk rotor element with the F(1) delta and epsilon subunits. The chain is ATP synthase subunit c from Clavibacter michiganensis subsp. michiganensis (strain NCPPB 382).